The following is a 317-amino-acid chain: Transaldolase (317 aa).

The active-site Schiff-base intermediate with substrate is Lys126.

It belongs to the transaldolase family. Type 1 subfamily. In terms of assembly, homodimer.

The protein localises to the cytoplasm. The enzyme catalyses D-sedoheptulose 7-phosphate + D-glyceraldehyde 3-phosphate = D-erythrose 4-phosphate + beta-D-fructose 6-phosphate. The protein operates within carbohydrate degradation; pentose phosphate pathway; D-glyceraldehyde 3-phosphate and beta-D-fructose 6-phosphate from D-ribose 5-phosphate and D-xylulose 5-phosphate (non-oxidative stage): step 2/3. Functionally, transaldolase is important for the balance of metabolites in the pentose-phosphate pathway. This Burkholderia thailandensis (strain ATCC 700388 / DSM 13276 / CCUG 48851 / CIP 106301 / E264) protein is Transaldolase.